The chain runs to 465 residues: Gamma-aminobutyric acid receptor subunit rho-2 (465 aa).

A signal peptide spans 1-20; it reads MPYFTRLILFLFCLMVLVES. The Extracellular portion of the chain corresponds to 21 to 260; the sequence is RKPKRKRWTG…LYINFTLRRH (240 aa). Arg-105 contacts 4-aminobutanoate. Asn-120 carries an N-linked (GlcNAc...) asparagine glycan. A 4-aminobutanoate-binding site is contributed by Ser-169. Cysteines 178 and 192 form a disulfide. Position 197 (Glu-197) interacts with 4-aminobutanoate. Asn-254 carries N-linked (GlcNAc...) asparagine glycosylation. Residues 261-281 form a helical membrane-spanning segment; it reads IFFFLLQTYFPATLMVMLSWV. The Cytoplasmic portion of the chain corresponds to 282–293; that stretch reads SFWIDRRAVPAR. A helical transmembrane segment spans residues 294 to 314; sequence VSLGITTVLTMTTIITGVNAS. Topologically, residues 315-325 are extracellular; sequence MPRVSYVKAVD. Residues 326–346 form a helical membrane-spanning segment; sequence IYLWVSFVFVFLSVLEYAAVN. At 347 to 443 the chain is on the cytoplasmic side; it reads YLTTVQERKE…IFQNTHAIDK (97 aa). Residues 444-464 form a helical membrane-spanning segment; that stretch reads YSRLIFPASYIFFNLIYWSVF. Residue Ser-465 is a topological domain, extracellular.

It belongs to the ligand-gated ion channel (TC 1.A.9) family. Gamma-aminobutyric acid receptor (TC 1.A.9.5) subfamily. GABRR2 sub-subfamily. In terms of assembly, three rho subunits (rho-1/GBRR1, rho-2/GBRR2 and rho-3/GBRR3) coassemble either to form functional homopentamers or heteropentamers. Rho-2 is unable to form a functional homopentamer. Interacts with SQSTM1.

It localises to the postsynaptic cell membrane. Its subcellular location is the cell membrane. The enzyme catalyses chloride(in) = chloride(out). Rho subunit of the pentameric ligand-gated chloride channels responsible for mediating the effects of gamma-aminobutyric acid (GABA), the major inhibitory neurotransmitter in the brain. Rho-containing GABA-gated chloride channels are a subclass of GABA(A) receptors (GABAARs) entirely composed of rho subunits, where GABA molecules bind at the rho intersubunit interfaces. When activated by GABA, rho-GABAARs selectively allow the flow of chloride anions across the cell membrane down their electrochemical gradient. Rho-2 GABAARs may contribute to the regulation of glial development in the cerebellum by controlling extrasynaptic transmission. Rho-2 GABAARs are also involved in neuronal tonic (extrasynaptic) and phasic (synaptic) transmission in the Purkinje neurons of the cerebellum. Rho-2 GABAARs expressed in retina may play a role in retinal neurotransmission. The sequence is that of Gamma-aminobutyric acid receptor subunit rho-2 from Homo sapiens (Human).